A 318-amino-acid chain; its full sequence is tRNA pseudouridine synthase B (318 aa).

The active-site Nucleophile is the aspartate 47.

Belongs to the pseudouridine synthase TruB family. Type 1 subfamily.

It carries out the reaction uridine(55) in tRNA = pseudouridine(55) in tRNA. Responsible for synthesis of pseudouridine from uracil-55 in the psi GC loop of transfer RNAs. The sequence is that of tRNA pseudouridine synthase B from Shewanella putrefaciens (strain CN-32 / ATCC BAA-453).